We begin with the raw amino-acid sequence, 503 residues long: Probable cytosol aminopeptidase (503 aa).

Mn(2+)-binding residues include lysine 270 and aspartate 275. Residue lysine 282 is part of the active site. Mn(2+) contacts are provided by aspartate 293, aspartate 352, and glutamate 354. Arginine 356 is a catalytic residue.

This sequence belongs to the peptidase M17 family. Mn(2+) is required as a cofactor.

Its subcellular location is the cytoplasm. The catalysed reaction is Release of an N-terminal amino acid, Xaa-|-Yaa-, in which Xaa is preferably Leu, but may be other amino acids including Pro although not Arg or Lys, and Yaa may be Pro. Amino acid amides and methyl esters are also readily hydrolyzed, but rates on arylamides are exceedingly low.. The enzyme catalyses Release of an N-terminal amino acid, preferentially leucine, but not glutamic or aspartic acids.. Functionally, presumably involved in the processing and regular turnover of intracellular proteins. Catalyzes the removal of unsubstituted N-terminal amino acids from various peptides. The protein is Probable cytosol aminopeptidase of Yersinia enterocolitica serotype O:8 / biotype 1B (strain NCTC 13174 / 8081).